Here is a 1226-residue protein sequence, read N- to C-terminus: Probable DNA-binding protein SNT1 (1226 aa).

2 disordered regions span residues 1–219 (MGYP…YSRS) and 264–331 (LKST…PDNI). Positions 11–27 (GDKKRYHYSNNPNRRHP) are enriched in basic residues. The segment covering 31 to 64 (YSKNSFPKSSNNGFVSSPTADNSTNPSVTPSTAS) has biased composition (polar residues). Composition is skewed to low complexity over residues 81–103 (PRPS…SSTR) and 116–131 (SSST…NTST). 2 stretches are compositionally biased toward polar residues: residues 132–143 (ITHTNTDIGNSR) and 150–170 (SRYN…SALS). Serine 187 bears the Phosphoserine mark. Residues 202 to 211 (NNVSSVNNNS) are compositionally biased toward low complexity. Over residues 264–275 (LKSTHSQSSPSL) the composition is skewed to polar residues. The span at 280 to 304 (FHDANKLDKPEASVKVETPSKDETK) shows a compositional bias: basic and acidic residues. Serine 395 carries the phosphoserine modification. A coiled-coil region spans residues 539 to 591 (DLQKKYEKECEILTKLSENLRKEEIENKRKEHELMEQKRREEGIETEKEKSLR). Over residues 569–590 (EHELMEQKRREEGIETEKEKSL) the composition is skewed to basic and acidic residues. The disordered stretch occupies residues 569–605 (EHELMEQKRREEGIETEKEKSLRHPSSSSSSRRRNRA). Residues 668-720 (DASDNFTDHEHSLFLEGYLIHPKKFGKISHYMGGLRSPEECVLHYYRTKKTVN) form the SANT domain. The span at 732–745 (RKMSAAAKRRKRKE) shows a compositional bias: basic residues. A disordered region spans residues 732–796 (RKMSAAAKRR…SEVKGDPLGT (65 aa)). Residues 748 to 758 (NDEEVEVDESK) are compositionally biased toward acidic residues. Residues 759–773 (EESTNTIEKEEKSEN) are compositionally biased toward basic and acidic residues. Residue threonine 796 is modified to Phosphothreonine. An HTH myb-type domain is found at 884–938 (APEHKTSYWSVRESQLFPELLKEFGSQWSLISEKLGTKSTTMVRNYYQRNAARNG). The segment at residues 911–934 (WSLISEKLGTKSTTMVRNYYQRNA) is a DNA-binding region (H-T-H motif). Serine 1037 is modified (phosphoserine). The segment at 1172–1194 (SQGTPTFPLPAPRTSPISRAPPK) is disordered.

In terms of assembly, identified in a Set3C complex with SET3, HST1, HOS2, SIF2, CPR1 and HOS4.

Its subcellular location is the nucleus. Its function is as follows. Part of the Set3C complex, which is required to repress early/middle sporulation genes during meiosis. This is Probable DNA-binding protein SNT1 (SNT1) from Saccharomyces cerevisiae (strain ATCC 204508 / S288c) (Baker's yeast).